Consider the following 465-residue polypeptide: UDP-N-acetylmuramoylalanine--D-glutamate ligase (465 aa).

Residue 115–121 (GTDGKTT) participates in ATP binding.

It belongs to the MurCDEF family.

It localises to the cytoplasm. The enzyme catalyses UDP-N-acetyl-alpha-D-muramoyl-L-alanine + D-glutamate + ATP = UDP-N-acetyl-alpha-D-muramoyl-L-alanyl-D-glutamate + ADP + phosphate + H(+). The protein operates within cell wall biogenesis; peptidoglycan biosynthesis. Functionally, cell wall formation. Catalyzes the addition of glutamate to the nucleotide precursor UDP-N-acetylmuramoyl-L-alanine (UMA). This is UDP-N-acetylmuramoylalanine--D-glutamate ligase from Chlorobaculum tepidum (strain ATCC 49652 / DSM 12025 / NBRC 103806 / TLS) (Chlorobium tepidum).